We begin with the raw amino-acid sequence, 356 residues long: Glutamine synthetase nodule isozyme (356 aa).

Positions 19 to 99 (IIAEYIWVGG…VICDVYTPAG (81 aa)) constitute a GS beta-grasp domain. Residues 106–356 (KRHNAAKIFS…IAETTLLWKP (251 aa)) enclose the GS catalytic domain.

The protein belongs to the glutamine synthetase family. As to quaternary structure, homooctamer. In terms of tissue distribution, found at highest levels in root nodules.

It localises to the cytoplasm. The catalysed reaction is L-glutamate + NH4(+) + ATP = L-glutamine + ADP + phosphate + H(+). In Medicago sativa (Alfalfa), this protein is Glutamine synthetase nodule isozyme (GS1).